Reading from the N-terminus, the 319-residue chain is Sliding-clamp-loader large subunit (319 aa).

ATP is bound by residues 12 to 15 (EQKY), Ile24, 53 to 58 (GTGKTT), and Arg205.

Belongs to the Tevenvirinae sliding-clamp-loader large subunit family. In terms of assembly, the sliding-clamp-loader consists of 4 large subunits and 1 small subunit. Interacts with the sliding clamp; this interaction allows the sliding-clamp-loader to open the sliding clamp. Part of the replicase complex that includes the DNA polymerase, the polymerase clamp, the clamp loader complex, the single-stranded DNA binding protein, the primase, the helicase and the helicase assembly factor.

Functionally, forms the sliding-clamp-loader together with the small subunit. Functions as an ATPase enzyme. The clamp loader holds the clamp in an open conformation and places it onto the DNA. 4 ATP molecules must bind to the sliding-clamp-loader before the latter can open the sliding clamp. ATP hydrolysis triggers the detachment of the sliding clamp from the sliding-clamp-loader, freeing the sliding clamp to track along DNA. The sequence is that of Sliding-clamp-loader large subunit (44) from Enterobacteria phage T4 (Bacteriophage T4).